Consider the following 886-residue polypeptide: DNA repair and recombination protein RAD54B (886 aa).

Positions 1–12 (MRRSAAPSQVQG) are enriched in polar residues. Residues 1–95 (MRRSAAPSQV…ASKEITESKA (95 aa)) form a disordered region. At serine 14 the chain carries Phosphoserine. Polar residues predominate over residues 47–62 (AEQSQNDPGVCSSNPC). Basic and acidic residues-rich tracts occupy residues 67–76 (IPREVGDGTR) and 86–95 (ASKEITESKA). The Helicase ATP-binding domain occupies 291–458 (GMRAVGKCGA…FALVDFVNPG (168 aa)). 304 to 311 (DEMGLGKT) provides a ligand contact to ATP. The DEGH box motif lies at 409–412 (DEGH). In terms of domain architecture, Helicase C-terminal spans 627–788 (KLLAVIHELR…HIQFSVEELK (162 aa)).

Belongs to the SNF2/RAD54 helicase family. In terms of assembly, interacts with RAD51 through the NH2-terminal domain.

The protein localises to the nucleus. Functionally, involved in DNA repair and mitotic recombination. May play an active role in recombination processes in concert with other members of the RAD52 epistasis group. This chain is DNA repair and recombination protein RAD54B (Rad54b), found in Mus musculus (Mouse).